The following is a 172-amino-acid chain: Small ribosomal subunit protein uS5c (172 aa).

An S5 DRBM domain is found at 15 to 78 (WEEKVVQVKR…TDAKKHIINV (64 aa)).

This sequence belongs to the universal ribosomal protein uS5 family. As to quaternary structure, part of the 30S ribosomal subunit. Contacts protein S4.

Its subcellular location is the plastid. The protein resides in the chloroplast. Functionally, with S4 and S12 plays an important role in translational accuracy. The polypeptide is Small ribosomal subunit protein uS5c (rps5) (Gracilaria tenuistipitata var. liui (Red alga)).